We begin with the raw amino-acid sequence, 896 residues long: DNA mismatch repair protein MutS (896 aa).

607–614 provides a ligand contact to ATP; it reads GPNMSGKS. The segment at 809–835 is disordered; that stretch reads ANSVAPNTAASMPVEAADESQPVESET.

The protein belongs to the DNA mismatch repair MutS family.

Functionally, this protein is involved in the repair of mismatches in DNA. It is possible that it carries out the mismatch recognition step. This protein has a weak ATPase activity. This Lactiplantibacillus plantarum (strain ATCC BAA-793 / NCIMB 8826 / WCFS1) (Lactobacillus plantarum) protein is DNA mismatch repair protein MutS.